The chain runs to 466 residues: 55 kDa erythrocyte membrane protein (466 aa).

Thr-2 is modified (N-acetylthreonine). A phosphoserine mark is found at Ser-13 and Ser-19. Phosphothreonine is present on Thr-49. 3 positions are modified to phosphoserine: Ser-52, Ser-57, and Ser-110. The PDZ domain maps to 71 to 152; sequence LIQFEKVTEE…MISLKVIPNQ (82 aa). The region spanning 158–228 is the SH3 domain; sequence ALQMFMRAQF…PSPELQEWRV (71 aa). Residue Ser-243 is modified to Phosphoserine. The segment at 268-466 is interaction with PALS1; it reads VVSYEEVVRL…PQWVPVSWVY (199 aa). The Guanylate kinase-like domain maps to 282–451; the sequence is RKTLVLIGAS…TLKKLQEAFD (170 aa).

It belongs to the MAGUK family. Heterodimer with PALS1. Interacts with DLG5 and NF2. Interacts (via guanylate kinase-like domain) with WHRN (via third PDZ domain). Palmitoylated.

Its subcellular location is the cell membrane. The protein resides in the cell projection. It localises to the stereocilium. Functionally, essential regulator of neutrophil polarity. Regulates neutrophil polarization by regulating AKT1 phosphorylation through a mechanism that is independent of PIK3CG activity. In Pongo abelii (Sumatran orangutan), this protein is 55 kDa erythrocyte membrane protein (MPP1).